The primary structure comprises 167 residues: UPF0262 protein Nwi_0248 (167 aa).

Belongs to the UPF0262 family.

The protein is UPF0262 protein Nwi_0248 of Nitrobacter winogradskyi (strain ATCC 25391 / DSM 10237 / CIP 104748 / NCIMB 11846 / Nb-255).